The sequence spans 352 residues: Phenylalanine--tRNA ligase alpha subunit (352 aa).

Position 258 (E258) interacts with Mg(2+).

This sequence belongs to the class-II aminoacyl-tRNA synthetase family. Phe-tRNA synthetase alpha subunit type 1 subfamily. As to quaternary structure, tetramer of two alpha and two beta subunits. Requires Mg(2+) as cofactor.

It localises to the cytoplasm. It catalyses the reaction tRNA(Phe) + L-phenylalanine + ATP = L-phenylalanyl-tRNA(Phe) + AMP + diphosphate + H(+). This is Phenylalanine--tRNA ligase alpha subunit from Staphylococcus carnosus (strain TM300).